The following is an 830-amino-acid chain: Ribosome biogenesis protein ERB1 (830 aa).

The tract at residues 1 to 141 is disordered; sequence MAPQPLKVGT…ENKDLPVDEK (141 aa). Composition is skewed to acidic residues over residues 35-44 and 52-109; these read VSEESDEEFG and MSDD…DSDS. A compositionally biased stretch (basic and acidic residues) spans 131 to 141; it reads EENKDLPVDEK. WD repeat units lie at residues 481 to 520, 523 to 563, 660 to 698, 701 to 740, 744 to 783, and 799 to 830; these read PGDT…EVWR, LHAG…APHI, KTPG…LIRT, SGVK…KPYK, YHNR…DLMQ, and IDGI…LWCS.

The protein belongs to the WD repeat BOP1/ERB1 family. As to quaternary structure, component of the NOP7 complex, composed of ERB1, NOP7 and YTM1. The complex is held together by ERB1, which interacts with NOP7 via its N-terminal domain and with YTM1 via a high-affinity interaction between the seven-bladed beta-propeller domains of the 2 proteins. The NOP7 complex associates with the 66S pre-ribosome.

The protein resides in the nucleus. It localises to the nucleolus. The protein localises to the nucleoplasm. Its function is as follows. Component of the NOP7 complex, which is required for maturation of the 25S and 5.8S ribosomal RNAs and formation of the 60S ribosome. The chain is Ribosome biogenesis protein ERB1 from Cryptococcus neoformans var. neoformans serotype D (strain B-3501A) (Filobasidiella neoformans).